The following is a 387-amino-acid chain: MTSPAPEPVSIDSVALAQALIRRPSVTPADEGAMDVLQRQLEALGFNCRRMKFGEIENLYARRGTERPNLCFAGHTDVVPVGDSAAWTQGPFEAEIQDGMLYGRGAVDMKSAIAAFVAAVSNLPRDLPGSLSFLITGDEEGVAEDGTVRVVQALAAEGEVIDHCIVGEPTSANLLGDMVKIGRRGSINAWIAVDGRQGHVAYPQRAANPIPVMVDILSRLQSRVLDEGYEGFQPSNLEVTTIDVGNTATNVIPASAKARINIRFNPAHQGKDLRAWIEQECRDAADGFSGRVEALCKIGGEAFLTQPGAFTDVIVAAVGDATGRVPELSTTGGTSDARFIRSLCPVVEFGLVGATMHAVDERVPVQEIRDLANIYQALIGRYFAAFA.

Position 75 (histidine 75) interacts with Zn(2+). Aspartate 77 is an active-site residue. A Zn(2+)-binding site is contributed by aspartate 108. The active-site Proton acceptor is glutamate 139. Glutamate 140, glutamate 168, and histidine 357 together coordinate Zn(2+).

Belongs to the peptidase M20A family. DapE subfamily. Homodimer. Zn(2+) is required as a cofactor. The cofactor is Co(2+).

It carries out the reaction N-succinyl-(2S,6S)-2,6-diaminopimelate + H2O = (2S,6S)-2,6-diaminopimelate + succinate. Its pathway is amino-acid biosynthesis; L-lysine biosynthesis via DAP pathway; LL-2,6-diaminopimelate from (S)-tetrahydrodipicolinate (succinylase route): step 3/3. Catalyzes the hydrolysis of N-succinyl-L,L-diaminopimelic acid (SDAP), forming succinate and LL-2,6-diaminopimelate (DAP), an intermediate involved in the bacterial biosynthesis of lysine and meso-diaminopimelic acid, an essential component of bacterial cell walls. This is Succinyl-diaminopimelate desuccinylase from Caulobacter sp. (strain K31).